A 429-amino-acid chain; its full sequence is Enolase (429 aa).

Gln-168 contributes to the (2R)-2-phosphoglycerate binding site. Glu-210 serves as the catalytic Proton donor. Mg(2+) is bound by residues Asp-247, Glu-288, and Asp-315. Residues Lys-340, Arg-369, Ser-370, and Lys-391 each coordinate (2R)-2-phosphoglycerate. Lys-340 serves as the catalytic Proton acceptor.

The protein belongs to the enolase family. Requires Mg(2+) as cofactor.

The protein localises to the cytoplasm. Its subcellular location is the secreted. It localises to the cell surface. It catalyses the reaction (2R)-2-phosphoglycerate = phosphoenolpyruvate + H2O. It participates in carbohydrate degradation; glycolysis; pyruvate from D-glyceraldehyde 3-phosphate: step 4/5. Catalyzes the reversible conversion of 2-phosphoglycerate (2-PG) into phosphoenolpyruvate (PEP). It is essential for the degradation of carbohydrates via glycolysis. The sequence is that of Enolase from Nostoc sp. (strain PCC 7120 / SAG 25.82 / UTEX 2576).